Here is a 218-residue protein sequence, read N- to C-terminus: UPF0329 protein ECU10_1860 (218 aa).

It belongs to the UPF0329 family.

This chain is UPF0329 protein ECU10_1860, found in Encephalitozoon cuniculi (strain GB-M1) (Microsporidian parasite).